The following is a 172-amino-acid chain: Adenylate kinase isoenzyme 6 (172 aa).

The ATP site is built by glycine 13, glycine 15, lysine 16, threonine 17, and threonine 18. The NMPbind stretch occupies residues 33–56 (NVGDLAREGHLYDGYDEEYGCPIL). The LID stretch occupies residues 108–118 (TRGYHEKKLQD). ATP is bound at residue arginine 109.

Belongs to the adenylate kinase family. AK6 subfamily. As to quaternary structure, monomer and homodimer. Interacts with small ribosomal subunit protein uS11. Not a structural component of 43S pre-ribosomes, but transiently interacts with them by binding to uS11. Interacts with COIL (via C-terminus).

Its subcellular location is the cytoplasm. The protein localises to the nucleus. It localises to the nucleoplasm. The protein resides in the cajal body. The enzyme catalyses AMP + ATP = 2 ADP. It carries out the reaction ATP + H2O = ADP + phosphate + H(+). Broad-specificity nucleoside monophosphate (NMP) kinase that catalyzes the reversible transfer of the terminal phosphate group between nucleoside triphosphates and monophosphates. Also has ATPase activity. Involved in the late cytoplasmic maturation steps of the 40S ribosomal particles, specifically 18S rRNA maturation. While NMP activity is not required for ribosome maturation, ATPase activity is. Associates transiently with small ribosomal subunit protein uS11. ATP hydrolysis breaks the interaction with uS11. May temporarily remove uS11 from the ribosome to enable a conformational change of the ribosomal RNA that is needed for the final maturation step of the small ribosomal subunit. Its NMP activity may have a role in nuclear energy homeostasis. May be involved in regulation of Cajal body (CB) formation. This Rattus norvegicus (Rat) protein is Adenylate kinase isoenzyme 6.